Consider the following 766-residue polypeptide: AMP deaminase 3 (766 aa).

2 positions are modified to phosphoserine: Ser-85 and Ser-107. Residues 89–114 (QMPTQQDWKGPPTASPAMSPATPLVP) are disordered. Residues 99–110 (PPTASPAMSPAT) are compositionally biased toward low complexity. Zn(2+)-binding residues include His-316 and His-318. Substrate-binding positions include His-318 and 387 to 392 (KFNSKY). Residue His-585 participates in Zn(2+) binding. Substrate is bound at residue Glu-588. His-607 functions as the Proton acceptor in the catalytic mechanism. Asp-662 lines the Zn(2+) pocket. 663-666 (DPMQ) is a binding site for substrate.

It belongs to the metallo-dependent hydrolases superfamily. Adenosine and AMP deaminases family. Homotetramer. The cofactor is Zn(2+). In terms of tissue distribution, found in heart, lung brain, spleen, kidney and to a lesser extent in liver.

The enzyme catalyses AMP + H2O + H(+) = IMP + NH4(+). It participates in purine metabolism; IMP biosynthesis via salvage pathway; IMP from AMP: step 1/1. AMP deaminase plays a critical role in energy metabolism. This Mus musculus (Mouse) protein is AMP deaminase 3.